The primary structure comprises 466 residues: 3-isopropylmalate dehydratase large subunit (466 aa).

Residues cysteine 347, cysteine 407, and cysteine 410 each coordinate [4Fe-4S] cluster.

It belongs to the aconitase/IPM isomerase family. LeuC type 1 subfamily. Heterodimer of LeuC and LeuD. The cofactor is [4Fe-4S] cluster.

The catalysed reaction is (2R,3S)-3-isopropylmalate = (2S)-2-isopropylmalate. The protein operates within amino-acid biosynthesis; L-leucine biosynthesis; L-leucine from 3-methyl-2-oxobutanoate: step 2/4. In terms of biological role, catalyzes the isomerization between 2-isopropylmalate and 3-isopropylmalate, via the formation of 2-isopropylmaleate. This is 3-isopropylmalate dehydratase large subunit from Buchnera aphidicola subsp. Thelaxes suberi.